We begin with the raw amino-acid sequence, 261 residues long: Cytochrome c oxidase subunit 3 (261 aa).

Over 1 to 15 (MTHQTHAYHMVNPSP) the chain is Mitochondrial matrix. Residues 16-34 (WPLTGALSALLMTSGLIMW) form a helical membrane-spanning segment. The Mitochondrial intermembrane segment spans residues 35 to 40 (FHFNST). The chain crosses the membrane as a helical span at residues 41 to 66 (TLLMLGLTTNMLTMYQWWRDVIREST). Residues 67-72 (FQGHHT) lie on the Mitochondrial matrix side of the membrane. A helical transmembrane segment spans residues 73–105 (PNVQKGLRYGMILFIISEVLFFTGFFWAFYHSS). Topologically, residues 106–128 (LAPTPELGGCWPPTGIHPLNPLE) are mitochondrial intermembrane. Residues 129–152 (VPLLNTSVLLASGVSITWAHHSLM) traverse the membrane as a helical segment. Topologically, residues 153–155 (EGN) are mitochondrial matrix. Residues 156-183 (RNHMLQALFITIALGVYFTLLQASEYYE) traverse the membrane as a helical segment. Over 184 to 190 (APFTISD) the chain is Mitochondrial intermembrane. Residues 191–223 (GVYGSTFFVATGFHGLHVIIGSTFLIVCFFRQL) traverse the membrane as a helical segment. At 224 to 232 (KFHFTSNHH) the chain is on the mitochondrial matrix side. A helical transmembrane segment spans residues 233–256 (FGFEAAAWYWHFVDVVWLFLYVSI). The Mitochondrial intermembrane portion of the chain corresponds to 257–261 (YWWGS).

Belongs to the cytochrome c oxidase subunit 3 family. As to quaternary structure, component of the cytochrome c oxidase (complex IV, CIV), a multisubunit enzyme composed of 14 subunits. The complex is composed of a catalytic core of 3 subunits MT-CO1, MT-CO2 and MT-CO3, encoded in the mitochondrial DNA, and 11 supernumerary subunits COX4I, COX5A, COX5B, COX6A, COX6B, COX6C, COX7A, COX7B, COX7C, COX8 and NDUFA4, which are encoded in the nuclear genome. The complex exists as a monomer or a dimer and forms supercomplexes (SCs) in the inner mitochondrial membrane with NADH-ubiquinone oxidoreductase (complex I, CI) and ubiquinol-cytochrome c oxidoreductase (cytochrome b-c1 complex, complex III, CIII), resulting in different assemblies (supercomplex SCI(1)III(2)IV(1) and megacomplex MCI(2)III(2)IV(2)).

Its subcellular location is the mitochondrion inner membrane. The enzyme catalyses 4 Fe(II)-[cytochrome c] + O2 + 8 H(+)(in) = 4 Fe(III)-[cytochrome c] + 2 H2O + 4 H(+)(out). Functionally, component of the cytochrome c oxidase, the last enzyme in the mitochondrial electron transport chain which drives oxidative phosphorylation. The respiratory chain contains 3 multisubunit complexes succinate dehydrogenase (complex II, CII), ubiquinol-cytochrome c oxidoreductase (cytochrome b-c1 complex, complex III, CIII) and cytochrome c oxidase (complex IV, CIV), that cooperate to transfer electrons derived from NADH and succinate to molecular oxygen, creating an electrochemical gradient over the inner membrane that drives transmembrane transport and the ATP synthase. Cytochrome c oxidase is the component of the respiratory chain that catalyzes the reduction of oxygen to water. Electrons originating from reduced cytochrome c in the intermembrane space (IMS) are transferred via the dinuclear copper A center (CU(A)) of subunit 2 and heme A of subunit 1 to the active site in subunit 1, a binuclear center (BNC) formed by heme A3 and copper B (CU(B)). The BNC reduces molecular oxygen to 2 water molecules using 4 electrons from cytochrome c in the IMS and 4 protons from the mitochondrial matrix. The chain is Cytochrome c oxidase subunit 3 (MT-CO3) from Antilope cervicapra (Blackbuck).